A 289-amino-acid chain; its full sequence is ADP-polyphosphate phosphotransferase (289 aa).

It belongs to the polyphosphate kinase 2 (PPK2) family. Class I subfamily.

It catalyses the reaction [phosphate](n) + ATP = [phosphate](n+1) + ADP. Functionally, uses inorganic polyphosphate (polyP) as a donor to convert ADP to ATP. The protein is ADP-polyphosphate phosphotransferase of Rhodopseudomonas palustris (strain ATCC BAA-98 / CGA009).